The following is a 209-amino-acid chain: Protocatechuate 3,4-dioxygenase alpha chain (209 aa).

Arg142 is a binding site for 3,4-dihydroxybenzoate.

It belongs to the intradiol ring-cleavage dioxygenase family. The enzyme is an oligomer of 12 copies of the alpha and beta chains. It depends on Fe(3+) as a cofactor.

It carries out the reaction 3,4-dihydroxybenzoate + O2 = 3-carboxy-cis,cis-muconate + 2 H(+). The protein operates within aromatic compound metabolism; beta-ketoadipate pathway; 3-carboxy-cis,cis-muconate from 3,4-dihydroxybenzoate: step 1/1. Plays an essential role in the utilization of numerous aromatic and hydroaromatic compounds via the beta-ketoadipate pathway. The protein is Protocatechuate 3,4-dioxygenase alpha chain (pcaG) of Acinetobacter baylyi (strain ATCC 33305 / BD413 / ADP1).